Reading from the N-terminus, the 201-residue chain is MYB-like transcription factor EOBI (201 aa).

HTH myb-type domains follow at residues 10 to 62 (DVEV…LNYL) and 63 to 117 (RPDV…QKHI). 2 consecutive DNA-binding regions (H-T-H motif) follow at residues 38–62 (WNSLARSAGLKRTGKSCRLRWLNYL) and 90–113 (WSKIAKHLPGRTDNEIKNYWRTRI). The tract at residues 121-170 (DQNMKKPSKCEQNDQKAISTSQASTGPTDTIDSYSPSSYTENTNNNMENI) is disordered. A compositionally biased stretch (polar residues) spans 135–159 (QKAISTSQASTGPTDTIDSYSPSSY). Over residues 160-169 (TENTNNNMEN) the composition is skewed to low complexity.

As to expression, expressed exclusively in flower organs. Accumulates mostly in flower limbs, to a lower extent in pistils and flower tubes, and, at low levels, in stamens.

The protein localises to the nucleus. Functionally, MYB-type transcription factor controlling the production of volatile organic compounds (VOCs), including floral volatile benzenoids and phenylpropanoids (FVBP), in flowers of fragrant cultivars (e.g. cv. Mitchell and cv. V26) by regulating the expression of ODO1, a key regulator of the shikimate pathway, and of several biosynthetic floral scent-related genes (e.g. IGS, EGS, BSMT1, BSMT2, PAL1, PAL2, EPSPS, DAHPS, CS, CM1, ADT1 and PPA-AT). Binds to and activates the promoters of at least ODO1, IGS1 and PAL1. The polypeptide is MYB-like transcription factor EOBI (Petunia hybrida (Petunia)).